A 518-amino-acid polypeptide reads, in one-letter code: Tyrosine/DOPA decarboxylase 1 (518 aa).

Lysine 321 bears the N6-(pyridoxal phosphate)lysine mark.

This sequence belongs to the group II decarboxylase family. Homodimer. It depends on pyridoxal 5'-phosphate as a cofactor. In terms of tissue distribution, predominantly expressed in the roots.

It carries out the reaction L-tyrosine + H(+) = tyramine + CO2. It catalyses the reaction L-dopa + H(+) = dopamine + CO2. The enzyme catalyses 5-hydroxy-L-tryptophan + H(+) = serotonin + CO2. In terms of biological role, marginally higher substrate specificity for L-DOPA over L-tyrosine. The sequence is that of Tyrosine/DOPA decarboxylase 1 (TYDC1) from Papaver somniferum (Opium poppy).